A 141-amino-acid polypeptide reads, in one-letter code: Large ribosomal subunit protein uL11 (141 aa).

This sequence belongs to the universal ribosomal protein uL11 family. In terms of assembly, part of the ribosomal stalk of the 50S ribosomal subunit. Interacts with L10 and the large rRNA to form the base of the stalk. L10 forms an elongated spine to which L12 dimers bind in a sequential fashion forming a multimeric L10(L12)X complex. Post-translationally, one or more lysine residues are methylated.

Functionally, forms part of the ribosomal stalk which helps the ribosome interact with GTP-bound translation factors. The sequence is that of Large ribosomal subunit protein uL11 from Ligilactobacillus salivarius (strain UCC118) (Lactobacillus salivarius).